Consider the following 202-residue polypeptide: Small ribosomal subunit protein uS4c (202 aa).

The interval 18 to 45 (LPGLTRKMAKRKSPPGQHGAASKKPSQY) is disordered. An S4 RNA-binding domain is found at 90–152 (MRLDTTIFRL…SRSRKLIEGY (63 aa)).

It belongs to the universal ribosomal protein uS4 family. In terms of assembly, part of the 30S ribosomal subunit. Contacts protein S5. The interaction surface between S4 and S5 is involved in control of translational fidelity.

Its subcellular location is the plastid. It is found in the chloroplast. Its function is as follows. One of the primary rRNA binding proteins, it binds directly to 16S rRNA where it nucleates assembly of the body of the 30S subunit. With S5 and S12 plays an important role in translational accuracy. This chain is Small ribosomal subunit protein uS4c (rps4), found in Nephroselmis olivacea (Green alga).